We begin with the raw amino-acid sequence, 628 residues long: MLAAEKRRLLHKTRPVSASEKPGSIYPQRALYLLVCFSIATISLGYLHFIGAIDIGRFGISSVISDLTKQDAVSEPFSLHKEQTSSVHTESDEQTFELKHIFHHGTGPENYRLHRRLDITPSYLAKHSSYFADFSQRLAQKRDDSSVDSENLEDIYNLMDWPDVHKHKNPFTIQLPIKKDHKKGKVVRLKDRHEPGFLDSYLSYALQVKGDPKILNRIALEWEDEIEIDIPNMKDKDTLVSLATISSNAYVKFPKDENEKNKSDWIDVGQWEPDQENVDLNFGWEDIGLRGHVFVSKDNKTVVIGIKGTSGAGLPGGGSDETAGNDKDNDNLLFSCCCARVGYMWTTVCNCYEKTYTCNQDCLEKELLREDKYYQAVLDLYRNVSAIYPPETTNVWVTGHSLGGALASLLGRTYGLPVVAFEAPGEMLATKRLHLPQPPGIPKFMENIWHVGNTADPIYMGVCNGASSTCNVAGYAMETACHTGYQCVYDVVTDLGWRVNLLNHRIHTVIDDIILAYNDTAQCIEQPPCRDCFNWRFTSHDDDVPDEPEMPNPLRPKPKPKPSSSTSDGKNNRISSTATTTISPTSRKADPTSSDISEPSESPKKCLERTWYGWCSKWGYDGDVDDDQ.

The Cytoplasmic segment spans residues 1–32 (MLAAEKRRLLHKTRPVSASEKPGSIYPQRALY). Residues 33-53 (LLVCFSIATISLGYLHFIGAI) form a helical; Signal-anchor for type II membrane protein membrane-spanning segment. Residues 54 to 628 (DIGRFGISSV…GYDGDVDDDQ (575 aa)) lie on the Lumenal side of the membrane. 3 N-linked (GlcNAc...) asparagine glycosylation sites follow: Asn-261, Asn-299, and Asn-383. Ser-401 serves as the catalytic Charge relay system. N-linked (GlcNAc...) asparagine glycosylation is present at Asn-518. The segment at 540-605 (HDDDVPDEPE…ISEPSESPKK (66 aa)) is disordered. Positions 562 to 586 (PSSSTSDGKNNRISSTATTTISPTS) are enriched in low complexity. The span at 591-600 (PTSSDISEPS) shows a compositional bias: polar residues.

Belongs to the AB hydrolase superfamily. Lipase family. As to quaternary structure, binds to both phosphatidylinositol (PI) and phosphatidylinositol 3,5-bisphosphate (PIP2).

The protein localises to the endosome. Its subcellular location is the multivesicular body membrane. The protein resides in the prevacuolar compartment membrane. The catalysed reaction is a triacylglycerol + H2O = a diacylglycerol + a fatty acid + H(+). Functionally, lipase which is essential for lysis of subvacuolar cytoplasm to vacuole targeted bodies and intravacuolar autophagic bodies. Involved in the lysis of intravacuolar multivesicular body (MVB) vesicles. The intravacuolar membrane disintegration by ATG15 is critical to life span extension. The chain is Putative lipase ATG15 (ATG15) from Scheffersomyces stipitis (strain ATCC 58785 / CBS 6054 / NBRC 10063 / NRRL Y-11545) (Yeast).